Consider the following 613-residue polypeptide: Cleavage and polyadenylation specificity factor subunit 3-II (613 aa).

Residues 67–72 carry the HXHXDH motif motif; that stretch reads HFHMDH.

It belongs to the metallo-beta-lactamase superfamily. RNA-metabolizing metallo-beta-lactamase-like family. INTS11 subfamily. As to quaternary structure, component of the CPSF complex, at least composed of CPSF160, CPSF100, CPSF73-I, CPSF73-II, CPSF30, FY and FIPS5. Interacts with CPSF30, CPSF100, CPSF160 and FY. As to expression, highly expressed in senescence leaves, petals, stamens, pollen and late stages of siliques with seeds. Also detected in roots, stems, leaves and seedlings.

The protein localises to the nucleus. Its function is as follows. Component of the cleavage and polyadenylation specificity factor (CPSF) complex that play a key role in pre-mRNA 3'-end formation, recognizing the AAUAAA signal sequence and interacting with poly(A) polymerase and other factors to bring about cleavage and poly(A) addition. May function as mRNA 3'-end-processing endonuclease and also be involved in the histone 3'-end pre-mRNA processing. This is Cleavage and polyadenylation specificity factor subunit 3-II (CPSF73-II) from Arabidopsis thaliana (Mouse-ear cress).